Consider the following 151-residue polypeptide: MHSLQAKILDPRLGSDFPLPQYATPGSAGLDLRAMLKEDSVLGPGQTLLIPTGLSIYIADPGLAALVLPRSGLGHKHGIVLGNLVGLIDSDYQGELMVSCWNRGESPFTIAVGERIAQLVLVPVVQAHFELVEAFDESQRGAGGFGHSGSH.

Residues 70-72, asparagine 83, 87-89, and methionine 97 contribute to the substrate site; these read RSG and LID.

Belongs to the dUTPase family. Requires Mg(2+) as cofactor.

The enzyme catalyses dUTP + H2O = dUMP + diphosphate + H(+). It functions in the pathway pyrimidine metabolism; dUMP biosynthesis; dUMP from dCTP (dUTP route): step 2/2. In terms of biological role, this enzyme is involved in nucleotide metabolism: it produces dUMP, the immediate precursor of thymidine nucleotides and it decreases the intracellular concentration of dUTP so that uracil cannot be incorporated into DNA. This is Deoxyuridine 5'-triphosphate nucleotidohydrolase from Pseudomonas aeruginosa (strain LESB58).